A 155-amino-acid chain; its full sequence is Small ribosomal subunit protein uS9 (155 aa).

This sequence belongs to the universal ribosomal protein uS9 family.

The chain is Small ribosomal subunit protein uS9 from Allorhizobium ampelinum (strain ATCC BAA-846 / DSM 112012 / S4) (Agrobacterium vitis (strain S4)).